The primary structure comprises 424 residues: MSRRYLFTSESVTEGHPDKICDQISDTILDALLTQDPSSRVAAEVVVNTGLVLITGEITTKANVNFVNLARKKIAEIGYTNADNGFSANSTSVLLALDEQSPDIAQGVNTAQETRQQDSDELFDKIGAGDQGIMFGFASNETPELMPLPISLAHRIARRLAAVRKTGELSYLRPDGKTQVTVVYEDGRPVGIDTILISTQHTATIGEITDEAAVQAKIKQDLWSAVVEPVFGDIDVKPNDQTRFLVNPTGKFVVGGPQGDSGLTGRKIIVDTYGGYSRHGGGAFSGKDPTKVDRSAAYAARYVAKNIVAAGLAEKVEIQLSYAIGVARPTSILVDTFGTGKVDEETLLELINQHFELRPAGIIHTFNLRNLPSERGGRFYQDVAAYGHFGRADLDLPWEQTDKAELLKQAANESLSAAIAQALT.

Residue histidine 16 participates in ATP binding. Aspartate 18 contacts Mg(2+). Position 44 (glutamate 44) interacts with K(+). L-methionine is bound by residues glutamate 57 and glutamine 100. A flexible loop region spans residues 100-110 (QSPDIAQGVNT). Residues 175 to 177 (DGK), 251 to 252 (KF), aspartate 260, 266 to 267 (RK), alanine 283, and lysine 287 contribute to the ATP site. Aspartate 260 lines the L-methionine pocket. Lysine 291 provides a ligand contact to L-methionine.

Belongs to the AdoMet synthase family. Homotetramer; dimer of dimers. Mg(2+) serves as cofactor. Requires K(+) as cofactor.

It is found in the cytoplasm. It carries out the reaction L-methionine + ATP + H2O = S-adenosyl-L-methionine + phosphate + diphosphate. It participates in amino-acid biosynthesis; S-adenosyl-L-methionine biosynthesis; S-adenosyl-L-methionine from L-methionine: step 1/1. Catalyzes the formation of S-adenosylmethionine (AdoMet) from methionine and ATP. The overall synthetic reaction is composed of two sequential steps, AdoMet formation and the subsequent tripolyphosphate hydrolysis which occurs prior to release of AdoMet from the enzyme. This is S-adenosylmethionine synthase from Nostoc punctiforme (strain ATCC 29133 / PCC 73102).